The primary structure comprises 350 residues: Nicotinate-nucleotide--dimethylbenzimidazole phosphoribosyltransferase (350 aa).

Glutamate 317 acts as the Proton acceptor in catalysis.

Belongs to the CobT family.

The enzyme catalyses 5,6-dimethylbenzimidazole + nicotinate beta-D-ribonucleotide = alpha-ribazole 5'-phosphate + nicotinate + H(+). It participates in nucleoside biosynthesis; alpha-ribazole biosynthesis; alpha-ribazole from 5,6-dimethylbenzimidazole: step 1/2. In terms of biological role, catalyzes the synthesis of alpha-ribazole-5'-phosphate from nicotinate mononucleotide (NAMN) and 5,6-dimethylbenzimidazole (DMB). The sequence is that of Nicotinate-nucleotide--dimethylbenzimidazole phosphoribosyltransferase from Shewanella sp. (strain W3-18-1).